The chain runs to 157 residues: uncharacterized protein (157 aa).

This sequence to E.coli YcjD and H.influenzae HI_0925.

This is an uncharacterized protein from Haemophilus influenzae (strain ATCC 51907 / DSM 11121 / KW20 / Rd).